The primary structure comprises 348 residues: Fructose-1,6-bisphosphatase (348 aa).

The Pro/N-degron motif lies at 2 to 5 (PTLV). Residue serine 12 is modified to Phosphoserine. AMP contacts are provided by residues 27-31 (IIEHQ) and 38-42 (TGDFT). 2 residues coordinate Mg(2+): aspartate 79 and glutamate 108. Residue 122-123 (SY) coordinates AMP. Residues aspartate 128, isoleucine 130, and aspartate 131 each coordinate Mg(2+). 131–134 (DGSS) contributes to the substrate binding site. Arginine 150 provides a ligand contact to AMP. Substrate is bound by residues 222-225 (NEGN), 255-260 (RYVGSM), tyrosine 276, and 286-288 (KLR). Residue glutamate 292 participates in Mg(2+) binding.

It belongs to the FBPase class 1 family. Homotetramer. Mg(2+) serves as cofactor. Ubiquitinated. Targeted for proteasomal degradation when cells are shifted to glucose-containing growth medium.

The enzyme catalyses beta-D-fructose 1,6-bisphosphate + H2O = beta-D-fructose 6-phosphate + phosphate. It functions in the pathway carbohydrate biosynthesis; gluconeogenesis. Subject to complex allosteric regulation. The enzyme can assume an active R-state, or an inactive T-state. Intermediate conformations may exist. AMP acts as allosteric inhibitor. AMP binding affects the turnover of bound substrate and not the affinity for substrate. This Saccharomyces cerevisiae (strain ATCC 204508 / S288c) (Baker's yeast) protein is Fructose-1,6-bisphosphatase (FBP1).